A 512-amino-acid chain; its full sequence is MTITLHPGSVPLADLAKIYWHGEPAVLDRSFDAGIERAAARIAAIAAGNEPVYGVNTGFGKLASIKIDAADTATLQRNLILSHCCGVGAPLAENIVRLILSLKLISLGRGASGVRLDLVRLIEAMLEKGVIPLIPEKGSVGASGDLAPLAHMAAVMMGEAEAFYQGEKLPGRIALERAGLTPVILAAKEGLALINGTQASTALALAGLFRAHRAAQAALITGAMSTDAAMGSSAPFTADIHTLRGHKGQIDTAASLRALLEGSVIRQSHLDGDERVQDPYCIRCQPQVDGACLDLLRMTARTLEIEANAVTDNPLVLSDDSVVSGGNFHAEPVAFAADQIAIAVCEIGAIAQRRIALLVDPTLSYGLPAFLAKKPGLNSGLMIAEVTSAALMSENKQMAHPASVDSTPTSANQEDHVSMACHGARRLLQMTENLFAIIGIEALTAAQGVEFRAPLTTSPELQKAMETLRAVVPTLEEDRFMAPDLAAASALVADGSLVGSVSSGILPGLEGF.

Positions 142-144 (ASG) form a cross-link, 5-imidazolinone (Ala-Gly). A 2,3-didehydroalanine (Ser) modification is found at Ser-143.

The protein belongs to the PAL/histidase family. In terms of processing, contains an active site 4-methylidene-imidazol-5-one (MIO), which is formed autocatalytically by cyclization and dehydration of residues Ala-Ser-Gly.

It is found in the cytoplasm. It carries out the reaction L-histidine = trans-urocanate + NH4(+). The protein operates within amino-acid degradation; L-histidine degradation into L-glutamate; N-formimidoyl-L-glutamate from L-histidine: step 1/3. The protein is Histidine ammonia-lyase of Allorhizobium ampelinum (strain ATCC BAA-846 / DSM 112012 / S4) (Agrobacterium vitis (strain S4)).